A 503-amino-acid polypeptide reads, in one-letter code: D-xylose-proton symporter-like 1 (503 aa).

The disordered stretch occupies residues 1-23 (MGFDPENQSISSVGQVVGDSSSG). Low complexity predominate over residues 8-23 (QSISSVGQVVGDSSSG). 12 helical membrane-spanning segments follow: residues 51–73 (FLFPALGALLFGYEIGATSCAIM), 95–115 (IITSGSLYGALIGSIVAFSVA), 129–149 (FLYLVGAIVTVVAPVFSILII), 152–172 (VTYGMGIGLTMHAAPMYIAET), 190–210 (VLGMVGGYGIGSLWITVISGW), 213–233 (MYATILPFPVIMGTGMCWLPA), 305–325 (ALTIAGGLVLFQQITGQPSVL), 346–366 (ISILLGLLKLVMTGVSVIVID), 374–394 (LLCGVSGMVISLFLLGSYYMF), 405–425 (ALLLYVGCYQLSFGPIGWLMI), 437–457 (GISLAVLVNFGANALVTFAFS), and 467–487 (ILFCAFGVICVVSLFFIYYIV).

It belongs to the major facilitator superfamily. Sugar transporter (TC 2.A.1.1) family.

The protein resides in the membrane. The polypeptide is D-xylose-proton symporter-like 1 (Arabidopsis thaliana (Mouse-ear cress)).